The primary structure comprises 252 residues: Mediator of RNA polymerase II transcription subunit 4 (252 aa).

Coiled coils occupy residues 5–31 (KKST…ETLA) and 70–112 (KTHQ…QAKE). A disordered region spans residues 213-252 (MLPPNHSNEFLMESLGPNKENEEDVEVMSTDSSSSSSDSD). A compositionally biased stretch (low complexity) spans 241 to 252 (STDSSSSSSDSD).

It belongs to the Mediator complex subunit 4 family. Component of the Mediator complex.

It localises to the nucleus. Component of the Mediator complex, a coactivator involved in the regulated transcription of nearly all RNA polymerase II-dependent genes. Mediator functions as a bridge to convey information from gene-specific regulatory proteins to the basal RNA polymerase II transcription machinery. Mediator is recruited to promoters by direct interactions with regulatory proteins and serves as a scaffold for the assembly of a functional preinitiation complex with RNA polymerase II and the general transcription factors. The polypeptide is Mediator of RNA polymerase II transcription subunit 4 (med4) (Xenopus laevis (African clawed frog)).